The following is a 470-amino-acid chain: ATP synthase subunit beta (470 aa).

G151–T158 serves as a coordination point for ATP.

The protein belongs to the ATPase alpha/beta chains family. In terms of assembly, F-type ATPases have 2 components, CF(1) - the catalytic core - and CF(0) - the membrane proton channel. CF(1) has five subunits: alpha(3), beta(3), gamma(1), delta(1), epsilon(1). CF(0) has three main subunits: a(1), b(2) and c(9-12). The alpha and beta chains form an alternating ring which encloses part of the gamma chain. CF(1) is attached to CF(0) by a central stalk formed by the gamma and epsilon chains, while a peripheral stalk is formed by the delta and b chains.

The protein localises to the cell membrane. It catalyses the reaction ATP + H2O + 4 H(+)(in) = ADP + phosphate + 5 H(+)(out). Produces ATP from ADP in the presence of a proton gradient across the membrane. The catalytic sites are hosted primarily by the beta subunits. The protein is ATP synthase subunit beta of Mycoplasma mobile (strain ATCC 43663 / 163K / NCTC 11711) (Mesomycoplasma mobile).